A 329-amino-acid polypeptide reads, in one-letter code: Gut-specific cysteine proteinase (329 aa).

An N-terminal signal peptide occupies residues 1-15 (MKFLILTALCAVTLA). The propeptide at 16–84 (FVPINHQSAV…ATEQEVVLAS (69 aa)) is activation peptide. 6 disulfides stabilise this stretch: Cys98-Cys127, Cys110-Cys155, Cys146-Cys204, Cys147-Cys151, Cys183-Cys208, and Cys191-Cys196. Cys113 is a catalytic residue. Active-site residues include His275 and Asn295.

The protein belongs to the peptidase C1 family. As to expression, larvae exhibit strong expression in gut cells and weak expression in hypodermal cells. Adults exhibit the reverse: strong expression in hypodermal cells and weaker expression in gut cells.

In terms of biological role, thiol protease. Has a role as a digestive enzyme. The protein is Gut-specific cysteine proteinase (cpr-1) of Caenorhabditis elegans.